Consider the following 432-residue polypeptide: 3-phosphoshikimate 1-carboxyvinyltransferase (432 aa).

3 residues coordinate 3-phosphoshikimate: lysine 23, serine 24, and arginine 28. Lysine 23 serves as a coordination point for phosphoenolpyruvate. Positions 95 and 123 each coordinate phosphoenolpyruvate. 3-phosphoshikimate is bound by residues serine 167, glutamine 169, aspartate 317, and lysine 344. Residue glutamine 169 participates in phosphoenolpyruvate binding. Aspartate 317 functions as the Proton acceptor in the catalytic mechanism. 2 residues coordinate phosphoenolpyruvate: arginine 348 and arginine 390.

Belongs to the EPSP synthase family. Monomer.

The protein resides in the cytoplasm. It carries out the reaction 3-phosphoshikimate + phosphoenolpyruvate = 5-O-(1-carboxyvinyl)-3-phosphoshikimate + phosphate. It participates in metabolic intermediate biosynthesis; chorismate biosynthesis; chorismate from D-erythrose 4-phosphate and phosphoenolpyruvate: step 6/7. Functionally, catalyzes the transfer of the enolpyruvyl moiety of phosphoenolpyruvate (PEP) to the 5-hydroxyl of shikimate-3-phosphate (S3P) to produce enolpyruvyl shikimate-3-phosphate and inorganic phosphate. This is 3-phosphoshikimate 1-carboxyvinyltransferase from Staphylococcus aureus (strain JH9).